The primary structure comprises 100 residues: Nucleoid-associated protein RoseRS_1534 (100 aa).

This sequence belongs to the YbaB/EbfC family. Homodimer.

It is found in the cytoplasm. Its subcellular location is the nucleoid. Functionally, binds to DNA and alters its conformation. May be involved in regulation of gene expression, nucleoid organization and DNA protection. The chain is Nucleoid-associated protein RoseRS_1534 from Roseiflexus sp. (strain RS-1).